A 301-amino-acid chain; its full sequence is MKVETMNWISEVVRPRIKTLFKRETPENLWVKCPETGQMVFHKEVEANDYVIPGSEHHLRMTAQQRLKMMFDQGTWLDVPLPEVPVDPLKFRDEKRYVDRLKDARAKTGMMDAFKVGFGRVGGLPMTLAVQDFGFMGGSLGMAAGEAFVRGAETALDKRTPYVLFAASGGARMQEGILSLMQMPRTTVAVRRLNQARLPYLVVMTNPTTGGVTASYAMLGDIHLAEPGALIGFAGPRVIEQTIREKLPDGFQRSEYLREHGMIDQVVHRRDLKATIARLCGLLMQAPAAEPAEEEAEPLPA.

In terms of domain architecture, CoA carboxyltransferase N-terminal spans 29-298 (LWVKCPETGQ…AEPAEEEAEP (270 aa)).

The protein belongs to the AccD/PCCB family. In terms of assembly, acetyl-CoA carboxylase is a heterohexamer composed of biotin carboxyl carrier protein (AccB), biotin carboxylase (AccC) and two subunits each of ACCase subunit alpha (AccA) and ACCase subunit beta (AccD).

The protein resides in the cytoplasm. The catalysed reaction is N(6)-carboxybiotinyl-L-lysyl-[protein] + acetyl-CoA = N(6)-biotinyl-L-lysyl-[protein] + malonyl-CoA. The protein operates within lipid metabolism; malonyl-CoA biosynthesis; malonyl-CoA from acetyl-CoA: step 1/1. In terms of biological role, component of the acetyl coenzyme A carboxylase (ACC) complex. Biotin carboxylase (BC) catalyzes the carboxylation of biotin on its carrier protein (BCCP) and then the CO(2) group is transferred by the transcarboxylase to acetyl-CoA to form malonyl-CoA. The chain is Acetyl-coenzyme A carboxylase carboxyl transferase subunit beta from Methylobacterium nodulans (strain LMG 21967 / CNCM I-2342 / ORS 2060).